The chain runs to 273 residues: Tyrosinase (273 aa).

An N-terminal signal peptide occupies residues 1 to 18; that stretch reads MLLFTMGLLLAILQPSTG. Asparagine 86, asparagine 111, and asparagine 161 each carry an N-linked (GlcNAc...) asparagine glycan. 3 residues coordinate Cu cation: histidine 180, histidine 202, and histidine 211. An N-linked (GlcNAc...) asparagine glycan is attached at asparagine 230.

Belongs to the tyrosinase family. It depends on Cu(2+) as a cofactor.

The protein resides in the melanosome membrane. It localises to the melanosome. It carries out the reaction 2 L-dopa + O2 = 2 L-dopaquinone + 2 H2O. The catalysed reaction is L-tyrosine + O2 = L-dopaquinone + H2O. Its function is as follows. This is a copper-containing oxidase that functions in the formation of pigments such as melanins and other polyphenolic compounds. Catalyzes the initial and rate limiting step in the cascade of reactions leading to melanin production from tyrosine. In addition to hydroxylating tyrosine to DOPA (3,4-dihydroxyphenylalanine), also catalyzes the oxidation of DOPA to DOPA-quinone, and possibly the oxidation of DHI (5,6-dihydroxyindole) to indole-5,6 quinone. The sequence is that of Tyrosinase (TYR) from Coturnix japonica (Japanese quail).